A 481-amino-acid chain; its full sequence is tRNA:m(4)X modification enzyme TRM13 homolog (481 aa).

The CHHC U11-48K-type zinc finger occupies 56–83 (RILCPLDPKHTVYEDQLAKHLKKCNSRE). The Zn(2+) site is built by Cys-59, His-65, His-75, and Cys-79. Positions 113 to 140 (SLSEEQLENLIKKLRKASEGLNSTHEDH) form a coiled coil. Disordered regions lie at residues 296–319 (AKRI…SEKD) and 379–414 (LEGS…TDSL). Basic and acidic residues predominate over residues 385–407 (TPERKDAQRDENEEHDDGGDRLT).

Belongs to the methyltransferase TRM13 family.

The enzyme catalyses cytidine(4) in tRNA(Pro) + S-adenosyl-L-methionine = 2'-O-methylcytidine(4) in tRNA(Pro) + S-adenosyl-L-homocysteine + H(+). The catalysed reaction is cytidine(4) in tRNA(Gly)(GCC) + S-adenosyl-L-methionine = 2'-O-methylcytidine(4) in tRNA(Gly)(GCC) + S-adenosyl-L-homocysteine + H(+). It carries out the reaction adenosine(4) in tRNA(His) + S-adenosyl-L-methionine = 2'-O-methyladenosine(4) in tRNA(His) + S-adenosyl-L-homocysteine + H(+). Functionally, tRNA methylase which 2'-O-methylates cytidine(4) in tRNA(Pro) and tRNA(Gly)(GCC), and adenosine(4) in tRNA(His). The polypeptide is tRNA:m(4)X modification enzyme TRM13 homolog (Trmt13) (Mus musculus (Mouse)).